A 318-amino-acid chain; its full sequence is dTDP-6-deoxy-L-talose 4-dehydrogenase (NAD(P)(+)) (318 aa).

NAD(+) contacts are provided by residues 19-20 (FI), 60-61 (DP), Asn-95, Thr-120, Tyr-145, and Lys-149. The substrate site is built by Thr-120 and Tyr-145. Tyr-145 functions as the Proton acceptor in the catalytic mechanism.

It belongs to the NAD(P)-dependent epimerase/dehydratase family.

The catalysed reaction is dTDP-6-deoxy-beta-L-talose + NAD(+) = dTDP-4-dehydro-beta-L-rhamnose + NADH + H(+). The enzyme catalyses dTDP-6-deoxy-beta-L-talose + NADP(+) = dTDP-4-dehydro-beta-L-rhamnose + NADPH + H(+). Catalyzes the reduction of dTDP-6-deoxy-L-lyxo-4-hexulose to dTDP-6-deoxy-L-talose. Can use NAD(+) or NADP(+). This Kitasatospora kifunensis (Streptomyces kifunensis) protein is dTDP-6-deoxy-L-talose 4-dehydrogenase (NAD(P)(+)) (tal).